We begin with the raw amino-acid sequence, 499 residues long: Aspartyl/glutamyl-tRNA(Asn/Gln) amidotransferase subunit B (499 aa).

It belongs to the GatB/GatE family. GatB subfamily. In terms of assembly, heterotrimer of A, B and C subunits.

The enzyme catalyses L-glutamyl-tRNA(Gln) + L-glutamine + ATP + H2O = L-glutaminyl-tRNA(Gln) + L-glutamate + ADP + phosphate + H(+). It carries out the reaction L-aspartyl-tRNA(Asn) + L-glutamine + ATP + H2O = L-asparaginyl-tRNA(Asn) + L-glutamate + ADP + phosphate + 2 H(+). Allows the formation of correctly charged Asn-tRNA(Asn) or Gln-tRNA(Gln) through the transamidation of misacylated Asp-tRNA(Asn) or Glu-tRNA(Gln) in organisms which lack either or both of asparaginyl-tRNA or glutaminyl-tRNA synthetases. The reaction takes place in the presence of glutamine and ATP through an activated phospho-Asp-tRNA(Asn) or phospho-Glu-tRNA(Gln). This is Aspartyl/glutamyl-tRNA(Asn/Gln) amidotransferase subunit B from Leifsonia xyli subsp. xyli (strain CTCB07).